The sequence spans 419 residues: MCNRIISLFLLLFTGQVIALDLELTQGINSALPIAINSFGSDAAAQEIGNVIENDLTISGQFKIISGPQGANSQSSVSTLRQLGADSVVTGRVNQVGNRIEVSFTLADAVANGNILLTKTFQINANQVRALAHHISDEVYQKLTGERGIFSTRIAYISVQRNGGRSRYSLEVADADGHNPQSLLVSSEPIMSPSWSPNGKSISYVSFEKKKAEIFTVSVETGQRRLITSFPGINGAPAWSPDGRHLAVVLSKSGTPKIYDVDLSSGSMKQLTFGNSIDTEPRYSPDGRSLLFTSGRGGSPQVYRLSLADGQISRVTFEGNYNARASYTPDMKHIVMLHREDRQFNIGVQNTGGGPISNLTFSGLDESPSVSPNSRLVLYATRYQDRGVLGIVSIDGRIRMRLPAREGDVQEPAWSPYLS.

The N-terminal stretch at 1 to 19 (MCNRIISLFLLLFTGQVIA) is a signal peptide.

Belongs to the TolB family. As to quaternary structure, the Tol-Pal system is composed of five core proteins: the inner membrane proteins TolA, TolQ and TolR, the periplasmic protein TolB and the outer membrane protein Pal. They form a network linking the inner and outer membranes and the peptidoglycan layer.

It localises to the periplasm. Part of the Tol-Pal system, which plays a role in outer membrane invagination during cell division and is important for maintaining outer membrane integrity. The sequence is that of Tol-Pal system protein TolB from Legionella pneumophila (strain Paris).